Here is a 497-residue protein sequence, read N- to C-terminus: Serine hydroxymethyltransferase (497 aa).

(6S)-5,6,7,8-tetrahydrofolate is bound by residues L176 and 180–182 (GHL). At K289 the chain carries N6-(pyridoxal phosphate)lysine.

It belongs to the SHMT family. Homodimer. Requires pyridoxal 5'-phosphate as cofactor.

It is found in the cytoplasm. It catalyses the reaction (6R)-5,10-methylene-5,6,7,8-tetrahydrofolate + glycine + H2O = (6S)-5,6,7,8-tetrahydrofolate + L-serine. It participates in one-carbon metabolism; tetrahydrofolate interconversion. The protein operates within amino-acid biosynthesis; glycine biosynthesis; glycine from L-serine: step 1/1. Catalyzes the reversible interconversion of serine and glycine with tetrahydrofolate (THF) serving as the one-carbon carrier. This reaction serves as the major source of one-carbon groups required for the biosynthesis of purines, thymidylate, methionine, and other important biomolecules. Also exhibits THF-independent aldolase activity toward beta-hydroxyamino acids, producing glycine and aldehydes, via a retro-aldol mechanism. The chain is Serine hydroxymethyltransferase from Chlamydia abortus (strain DSM 27085 / S26/3) (Chlamydophila abortus).